Consider the following 439-residue polypeptide: Type I secretion system membrane fusion protein PrsE (439 aa).

Residues 20 to 40 (LIGVSVLALALVAGVGGWAAT) traverse the membrane as a helical segment.

The protein belongs to the membrane fusion protein (MFP) (TC 8.A.1) family. In terms of assembly, part of a type I secretion system composed of PrsD and PrsE.

Its subcellular location is the cell inner membrane. Its function is as follows. Mediates secretion of glycanase ExsH. The sequence is that of Type I secretion system membrane fusion protein PrsE (prsE) from Rhizobium meliloti (strain 1021) (Ensifer meliloti).